Consider the following 75-residue polypeptide: Small ribosomal subunit protein bS18 (75 aa).

It belongs to the bacterial ribosomal protein bS18 family. Part of the 30S ribosomal subunit. Forms a tight heterodimer with protein bS6.

Binds as a heterodimer with protein bS6 to the central domain of the 16S rRNA, where it helps stabilize the platform of the 30S subunit. The sequence is that of Small ribosomal subunit protein bS18 from Shewanella loihica (strain ATCC BAA-1088 / PV-4).